The chain runs to 290 residues: Small ribosomal subunit protein uS2 (290 aa).

Residues 263 to 282 (ATAGATWEAEAGGDWAAESA) show a composition bias toward low complexity. A disordered region spans residues 263–290 (ATAGATWEAEAGGDWAAESAQPNPETKW).

Belongs to the universal ribosomal protein uS2 family. In terms of assembly, component of the small ribosomal subunit. Mature ribosomes consist of a small (40S) and a large (60S) subunit. The 40S subunit contains about 33 different proteins and 1 molecule of RNA (18S). The 60S subunit contains about 49 different proteins and 3 molecules of RNA (25S, 5.8S and 5S). Interacts with rps21.

It localises to the cytoplasm. Required for the assembly and/or stability of the 40S ribosomal subunit. Required for the processing of the 20S rRNA-precursor to mature 18S rRNA in a late step of the maturation of 40S ribosomal subunits. This chain is Small ribosomal subunit protein uS2 (rps0), found in Talaromyces stipitatus (strain ATCC 10500 / CBS 375.48 / QM 6759 / NRRL 1006) (Penicillium stipitatum).